We begin with the raw amino-acid sequence, 90 residues long: RING finger protein Z (90 aa).

Gly-2 carries N-myristoyl glycine; by host lipidation. The RING-type; atypical zinc-finger motif lies at 32 to 68 (CKSCWQKFDSLVRCHDHYLCRHCLNLLLSVSDRCPLC). Residues 85 to 88 (PPPY) carry the PPXY motif motif.

Belongs to the arenaviridae Z protein family. Interacts with protein NP; this interaction probably directs the encapsidated genome to budding sites. Interacts (via RING-type zinc finger) with polymerase L; this interaction inhibits viral transcription and replication, Z partially blocks the product exit tunnel for the releasing nascent RNA product. Interacts with the glycoprotein complex; this interaction plays a role in virion budding. Interacts (via RING-type zinc finger) with host EIF4E; this interaction results in conformational changes of both interacting proteins and reduces EIF4E affinity for its substrate, the 5'-m7 G cap structure. Interacts (via late-budding domain) with host TSG101; this interaction is essential for budding and release of viral particles. Interacts with host RPLP0; this interaction may serve to load ribosome-like particles inside the virion. Interacts with host PML; this interaction induces PML bodies redistribution in the cytoplasm upon viral infection. In terms of processing, myristoylation is required for the role of RING finger protein Z in assembly and budding.

The protein resides in the virion. The protein localises to the host cytoplasm. It localises to the host perinuclear region. It is found in the host cell membrane. Its function is as follows. Plays a crucial role in virion assembly and budding. Expressed late in the virus life cycle, it acts as an inhibitor of viral transcription and RNA synthesis by interacting with the viral polymerase L. Presumably recruits the NP encapsidated genome to cellular membranes at budding sites via direct interaction with NP. Plays critical roles in the final steps of viral release by interacting with host TSG101, a member of the vacuolar protein-sorting pathway and using other cellular host proteins involved in vesicle formation pathway. The budding of the virus progeny occurs after association of protein Z with the viral glycoprotein complex SSP-GP1-GP2 at the cell periphery, step that requires myristoylation of protein Z. Also selectively represses protein production by associating with host EIF4E. In cell-based minigenome assay, has an inhibitory effect on the ribonucleoprotein machinery (vRNP), which is responsible for the replication and transcription of the viral genome. In Homo sapiens (Human), this protein is RING finger protein Z.